Consider the following 67-residue polypeptide: Large ribosomal subunit protein uL29 (67 aa).

The protein belongs to the universal ribosomal protein uL29 family.

This Clostridium acetobutylicum (strain ATCC 824 / DSM 792 / JCM 1419 / IAM 19013 / LMG 5710 / NBRC 13948 / NRRL B-527 / VKM B-1787 / 2291 / W) protein is Large ribosomal subunit protein uL29.